The chain runs to 399 residues: MQRKECVAMLLAGGQGSRLGVLTKKLAKPAVPFGGRYRIIDFTLSNCNNSGFDTVGVLTQYQPLALNTYIGIGSHWDLDRKNGGVTVLPPFVKEMGGEWYKGTANAIYQNIEFVDQYKPKYILILSGDHIYKMDYSLMLDFHKEKQADATIAVIEVPWQEASGFGIMNTAKDARIVEFEEKPKVPRSNLASMGVYIFNWELLKAYLEEDERNPRSSNDFGKNIIPLMLEAGQRMFAYPFKGYWRDVGTIESLWQANMDLLLENPKLDLNDQKWRIYSVTPHQPPQYVAPSARVNCSLINEGCMVFGNVYHSILFPGVDIGKGSTIRESVILSNVKIGKNVIVERAIVGVETIIEDNCHIGCKENSCPEDCSRITVVEGNIIVPTGSFIKKDCQLVGKAG.

Alpha-D-glucose 1-phosphate is bound by residues Tyr100, Gly165, 180 to 181 (EK), and Ser191.

The protein belongs to the bacterial/plant glucose-1-phosphate adenylyltransferase family. Homotetramer.

It catalyses the reaction alpha-D-glucose 1-phosphate + ATP + H(+) = ADP-alpha-D-glucose + diphosphate. It participates in glycan biosynthesis; glycogen biosynthesis. In terms of biological role, involved in the biosynthesis of ADP-glucose, a building block required for the elongation reactions to produce glycogen. Catalyzes the reaction between ATP and alpha-D-glucose 1-phosphate (G1P) to produce pyrophosphate and ADP-Glc. This chain is Glucose-1-phosphate adenylyltransferase, found in Desulforamulus reducens (strain ATCC BAA-1160 / DSM 100696 / MI-1) (Desulfotomaculum reducens).